Here is a 441-residue protein sequence, read N- to C-terminus: Lysine histidine transporter-like 2 (441 aa).

Over 1 to 32 (MEKSQSSPTKDASTKQKNVDDWLPITSSRNAK) the chain is Cytoplasmic. A helical transmembrane segment spans residues 33 to 53 (WWYSAFHNVTAMVGAGVLSLP). Residues 54 to 58 (YAMSN) are Extracellular-facing. The helical transmembrane segment at 59–79 (LGWGPGVTIMIMSWLITFYTL) threads the bilayer. The Cytoplasmic segment spans residues 80–110 (WQMVQMHEMVPGKRFDRYHELGQHAFGEKLG). A helical transmembrane segment spans residues 111 to 131 (LWIVVPQQLIVEVGVDIVYMV). Over 132–155 (TGGKSLKKIHDLLCTDCKNIRTTY) the chain is Extracellular. Helical transmembrane passes span 156–176 (WIMI…FNSI) and 177–197 (SIVS…AWAT). Residues 198 to 222 (SVKKGVHPNVDYSSRASTTSGNVFN) are Extracellular-facing. The chain crosses the membrane as a helical span at residues 223-243 (FLNALGDVAFAYAGHNVVLEI). Topologically, residues 244-264 (QATIPSTPEKPSKIAMWKGVV) are cytoplasmic. The chain crosses the membrane as a helical span at residues 265-285 (VAYIVVAICYFPVAFVCYYIF). Residues 286 to 300 (GNSVDDNILMTLEKP) lie on the Extracellular side of the membrane. The helical transmembrane segment at 301–321 (IWLIAIANAFVVVHVIGSYQI) threads the bilayer. The Cytoplasmic portion of the chain corresponds to 322-347 (YAMPVFDMLETFLVKKMMFAPSFKLR). A helical transmembrane segment spans residues 348–370 (FITRTLYVAFTMFVAICIPFFGG). At 371 to 373 (LLG) the chain is on the extracellular side. The helical transmembrane segment at 374–396 (FFGGFAFAPTTYYLPCIMWLCIK) threads the bilayer. Over 397–406 (KPKKYGLSWC) the chain is Cytoplasmic. Residues 407–427 (INWFCIVVGVILTILAPIGGL) traverse the membrane as a helical segment. At 428-441 (RTIIISAKNYEFFS) the chain is on the extracellular side.

This sequence belongs to the amino acid/polyamine transporter 2 family. Amino acid/auxin permease (AAAP) (TC 2.A.18.2) subfamily.

It localises to the cell membrane. Functionally, amino acid transporter. The polypeptide is Lysine histidine transporter-like 2 (Arabidopsis thaliana (Mouse-ear cress)).